A 410-amino-acid chain; its full sequence is Translation initiation factor 2 subunit gamma (410 aa).

The region spanning 6–203 (QSEVNIGMVG…AIQEFIPTPK (198 aa)) is the tr-type G domain. Positions 15–22 (GHVDHGKT) are G1. Mg(2+)-binding residues include Asp-18, Thr-22, Gly-43, and Ser-45. GTP is bound at residue 18-23 (DHGKTS). Residues 43–47 (GISIR) form a G2 region. Positions 58, 61, 73, and 76 each coordinate Zn(2+). Residues 90–93 (DAPG) are G3. GTP is bound by residues 146-149 (NKID) and 181-183 (SAH). Positions 146–149 (NKID) are G4. A G5 region spans residues 181-183 (SAH).

This sequence belongs to the TRAFAC class translation factor GTPase superfamily. Classic translation factor GTPase family. EIF2G subfamily. In terms of assembly, heterotrimer composed of an alpha, a beta and a gamma chain. Mg(2+) is required as a cofactor.

The catalysed reaction is GTP + H2O = GDP + phosphate + H(+). Functionally, eIF-2 functions in the early steps of protein synthesis by forming a ternary complex with GTP and initiator tRNA. The sequence is that of Translation initiation factor 2 subunit gamma from Methanococcus vannielii (strain ATCC 35089 / DSM 1224 / JCM 13029 / OCM 148 / SB).